The primary structure comprises 374 residues: Severin (374 aa).

Gelsolin-like repeat units follow at residues 58-109 (FTLE…DEYG), 180-220 (EGKT…KCSA), and 278-369 (EVIK…SFLK).

This sequence belongs to the villin/gelsolin family.

Its function is as follows. Severin blocks the ends of F-actin and causes the fragmentation and depolymerization of actin filaments. This severin binds stably with actin both in a Ca(2+) dependent and a Ca(2+) independent manner. This chain is Severin (AG8), found in Echinococcus granulosus (Hydatid tapeworm).